Reading from the N-terminus, the 378-residue chain is Calponin homolog OV9M (378 aa).

Residues 1–20 (MPAQPAQENAQDADDAQANA) are compositionally biased toward low complexity. A disordered region spans residues 1-35 (MPAQPAQENAQDADDAQANATMETRVAGQGQPKRV). Calponin-like repeat units follow at residues 50–75 (IPSQ…RNTQ), 98–123 (VRLQ…RDVC), 151–176 (VRLQ…RRET), 197–222 (IPLQ…RRET), 244–269 (IPSQ…RWEV), 285–310 (VRLQ…RNTT), and 330–355 (IPSQ…RDVK). The interval 175-194 (ETTKMTDSKHPDYDHERPDQ) is disordered. A disordered region spans residues 230 to 256 (HPEYDPESSIDSSTIPSQMGSNKYASQ). The segment covering 238-256 (SIDSSTIPSQMGSNKYASQ) has biased composition (polar residues). The disordered stretch occupies residues 331–352 (PSQAGWNRGDSQKGMTGFGAPR).

Belongs to the calponin family. In terms of tissue distribution, found in the longitudinal muscles below the hypodermis.

Functionally, could be involved in muscle contraction. The sequence is that of Calponin homolog OV9M from Onchocerca volvulus.